A 199-amino-acid polypeptide reads, in one-letter code: Pyridoxal 5'-phosphate synthase subunit PdxT (199 aa).

An L-glutamine-binding site is contributed by glycine 47 to serine 49. Residue cysteine 79 is the Nucleophile of the active site. L-glutamine contacts are provided by residues arginine 106 and isoleucine 133 to arginine 134. Residues histidine 169 and glutamate 171 each act as charge relay system in the active site.

The protein belongs to the glutaminase PdxT/SNO family. As to quaternary structure, in the presence of PdxS, forms a dodecamer of heterodimers. Only shows activity in the heterodimer.

It catalyses the reaction aldehydo-D-ribose 5-phosphate + D-glyceraldehyde 3-phosphate + L-glutamine = pyridoxal 5'-phosphate + L-glutamate + phosphate + 3 H2O + H(+). It carries out the reaction L-glutamine + H2O = L-glutamate + NH4(+). Its pathway is cofactor biosynthesis; pyridoxal 5'-phosphate biosynthesis. Catalyzes the hydrolysis of glutamine to glutamate and ammonia as part of the biosynthesis of pyridoxal 5'-phosphate. The resulting ammonia molecule is channeled to the active site of PdxS. The protein is Pyridoxal 5'-phosphate synthase subunit PdxT of Desulfitobacterium hafniense (strain Y51).